The chain runs to 546 residues: MAAKDVKFGNDARSKMLRGVNVLADAVKVTLGPKGRNVVLDKSFGSPMITKDGVSVAREVELEDKFENMGAQMLKEVASKANDAAGDGTTTATVLAQSIVNEGLKAVAAGMNPMDLKRGIDKAVIGAVAELKKLSVPCSDSKSIAQVGTISANADKTVGTLIAEAMEKVGKEGVITVEEGSGLQDELDVVEGMQFDRGYLSPYFVNKPEARSVELDNPFILLSDKKISNIREMLPILESVAKAGKPLLIIAEDVEGEALATLVVNNMRGIVKVAAVKAPGFGDRRKAMLQDIAILTSGTVISEEMGLDLEKSTLEDMGQAKRVVITKDTTTIIDGTGNKSMISSRVSQINQERDEATSDYDKEKLQERVAKLAGGVAVIKVGAATEVEMKEKKARVEDALHATRAAVEEGVVAGGGVALIRVANRIVNLRGENEDQNVGIRVARRAMEAPLRQIVANAGEEPSVIANKVKAGEGNTGYNAATEVYGNMIDMGILDPTKVTRSALQYAASIAGLMITTECMITDLPKEEKPDLSGAGAGMGGMGGMM.

ATP contacts are provided by residues 30–33, lysine 51, 87–91, glycine 415, 479–481, and aspartate 495; these read TLGP, DGTTT, and NAA. A disordered region spans residues 526–546; sequence KEEKPDLSGAGAGMGGMGGMM. The span at 535–546 shows a compositional bias: gly residues; that stretch reads AGAGMGGMGGMM.

Belongs to the chaperonin (HSP60) family. As to quaternary structure, forms a cylinder of 14 subunits composed of two heptameric rings stacked back-to-back. Interacts with the co-chaperonin GroES.

The protein resides in the cytoplasm. It catalyses the reaction ATP + H2O + a folded polypeptide = ADP + phosphate + an unfolded polypeptide.. Its function is as follows. Together with its co-chaperonin GroES, plays an essential role in assisting protein folding. The GroEL-GroES system forms a nano-cage that allows encapsulation of the non-native substrate proteins and provides a physical environment optimized to promote and accelerate protein folding. The sequence is that of Chaperonin GroEL from Wigglesworthia glossinidia brevipalpis.